Reading from the N-terminus, the 335-residue chain is N-lysine methyltransferase KMT5A-A (335 aa).

Disordered regions lie at residues 1 to 91 (MGRG…EVEK) and 133 to 183 (LPPE…EIES). Basic and acidic residues predominate over residues 67 to 91 (SVTHHESKCLGKPSTETRKKAEVEK). The span at 145–161 (VKNKPLRKKTQRQKSPN) shows a compositional bias: basic residues. The region spanning 199-320 (EGIKMHMITG…VGEELLYDYG (122 aa)) is the SET domain. S-adenosyl-L-methionine-binding positions include 209–211 (KGR), Y254, and 281–282 (NH).

It belongs to the class V-like SAM-binding methyltransferase superfamily. Histone-lysine methyltransferase family. PR/SET subfamily.

The protein resides in the nucleus. It localises to the chromosome. It carries out the reaction L-lysyl(20)-[histone H4] + S-adenosyl-L-methionine = N(6)-methyl-L-lysyl(20)-[histone H4] + S-adenosyl-L-homocysteine + H(+). The catalysed reaction is L-lysyl-[protein] + S-adenosyl-L-methionine = N(6)-methyl-L-lysyl-[protein] + S-adenosyl-L-homocysteine + H(+). Protein-lysine N-methyltransferase that monomethylates both histones and non-histone proteins. Specifically monomethylates 'Lys-20' of histone H4 (H4K20me1). H4K20me1 is enriched during mitosis and represents a specific tag for epigenetic transcriptional repression. Mainly functions in euchromatin regions, thereby playing a central role in the silencing of euchromatic genes. Required for cell proliferation, probably by contributing to the maintenance of proper higher-order structure of DNA during mitosis. Involved in chromosome condensation and proper cytokinesis. The polypeptide is N-lysine methyltransferase KMT5A-A (Xenopus laevis (African clawed frog)).